Consider the following 236-residue polypeptide: Large ribosomal subunit protein uL3 (236 aa).

This sequence belongs to the universal ribosomal protein uL3 family. As to quaternary structure, part of the 50S ribosomal subunit. Forms a cluster with proteins L14 and L19.

Functionally, one of the primary rRNA binding proteins, it binds directly near the 3'-end of the 23S rRNA, where it nucleates assembly of the 50S subunit. The sequence is that of Large ribosomal subunit protein uL3 from Anaeromyxobacter dehalogenans (strain 2CP-C).